The sequence spans 808 residues: DNA gyrase subunit B (808 aa).

The region spanning 429–544 (SELFIVEGDS…KGYLYIAQPP (116 aa)) is the Toprim domain. Residues E435, D509, and D511 each contribute to the Mg(2+) site.

It belongs to the type II topoisomerase GyrB family. Heterotetramer, composed of two GyrA and two GyrB chains. In the heterotetramer, GyrA contains the active site tyrosine that forms a transient covalent intermediate with DNA, while GyrB binds cofactors and catalyzes ATP hydrolysis. Requires Mg(2+) as cofactor. It depends on Mn(2+) as a cofactor. Ca(2+) serves as cofactor.

It is found in the cytoplasm. It catalyses the reaction ATP-dependent breakage, passage and rejoining of double-stranded DNA.. A type II topoisomerase that negatively supercoils closed circular double-stranded (ds) DNA in an ATP-dependent manner to modulate DNA topology and maintain chromosomes in an underwound state. Negative supercoiling favors strand separation, and DNA replication, transcription, recombination and repair, all of which involve strand separation. Also able to catalyze the interconversion of other topological isomers of dsDNA rings, including catenanes and knotted rings. Type II topoisomerases break and join 2 DNA strands simultaneously in an ATP-dependent manner. In Rickettsia bellii (strain RML369-C), this protein is DNA gyrase subunit B.